A 350-amino-acid chain; its full sequence is Cilia- and flagella-associated protein 36 (350 aa).

Positions 142-167 form a coiled coil; it reads SELEQQEMKILQEVLRRSKEEYDLQM. Disordered stretches follow at residues 171–233 and 301–337; these read GLGS…ATTA and RQTGKGLTDTAAAAAPEPKPATQEISVEEKKKLQKRK. Residues 177–220 are compositionally biased toward polar residues; the sequence is LASTSSSVSETPQNPEQRLSNGVSDPLTLTQPDSEMEESSTATQ. A coiled-coil region spans residues 280–350; it reads VALQQRSEYL…EKLKEEVIKK (71 aa).

Belongs to the CFAP36 family.

The protein resides in the nucleus. Its subcellular location is the cytoplasm. It is found in the cell projection. The protein localises to the cilium. It localises to the flagellum. In Danio rerio (Zebrafish), this protein is Cilia- and flagella-associated protein 36.